Consider the following 744-residue polypeptide: Adenosylcobalamin-dependent ribonucleoside-triphosphate reductase (744 aa).

Cysteines 120 and 424 form a disulfide. Positions Ser148–Met159 are effector region-1. The effector region-2 stretch occupies residues Val169–Val318. Catalysis depends on residues Cys413 and Glu415. Positions Phe570–Val631 are adenosylcobalamin-binding-1. The interval Leu690–Glu729 is adenosylcobalamin-binding-2.

It belongs to the class II ribonucleoside-triphosphate reductase family. Monomer. Requires adenosylcob(III)alamin as cofactor.

It catalyses the reaction a 2'-deoxyribonucleoside 5'-triphosphate + [thioredoxin]-disulfide + H2O = a ribonucleoside 5'-triphosphate + [thioredoxin]-dithiol. Allosterically regulated by ATP and dNTP. This chain is Adenosylcobalamin-dependent ribonucleoside-triphosphate reductase (rtpR), found in Lactobacillus helveticus (strain DPC 4571).